Here is a 431-residue protein sequence, read N- to C-terminus: Adenylosuccinate synthetase (431 aa).

GTP is bound by residues 12–18 (GDEGKGK) and 40–42 (GHT). Asp13 functions as the Proton acceptor in the catalytic mechanism. The Mg(2+) site is built by Asp13 and Gly40. IMP is bound by residues 13-16 (DEGK), 38-41 (NAGH), Thr131, Arg145, Gln225, Thr240, and Arg304. His41 serves as the catalytic Proton donor. A substrate-binding site is contributed by 300-306 (VNTGRPR). Residues Arg306, 332-334 (KLD), and 414-416 (STS) contribute to the GTP site.

It belongs to the adenylosuccinate synthetase family. Homodimer. Requires Mg(2+) as cofactor.

Its subcellular location is the cytoplasm. The catalysed reaction is IMP + L-aspartate + GTP = N(6)-(1,2-dicarboxyethyl)-AMP + GDP + phosphate + 2 H(+). It participates in purine metabolism; AMP biosynthesis via de novo pathway; AMP from IMP: step 1/2. Plays an important role in the de novo pathway of purine nucleotide biosynthesis. Catalyzes the first committed step in the biosynthesis of AMP from IMP. The chain is Adenylosuccinate synthetase from Rhizobium rhizogenes (strain K84 / ATCC BAA-868) (Agrobacterium radiobacter).